Reading from the N-terminus, the 458-residue chain is Dihydrolipoyllysine-residue acetyltransferase component of pyruvate dehydrogenase complex, mitochondrial (458 aa).

The N-terminal 28 residues, 1 to 28, are a transit peptide targeting the mitochondrion; that stretch reads MIVPVLSRQALRHASVARVALPSLTRWY. In terms of domain architecture, Lipoyl-binding spans 34-110; the sequence is HTVVKMPALS…AVGNPIAILV (77 aa). Lys-75 is modified (N6-lipoyllysine). A disordered region spans residues 126 to 164; the sequence is DAGGETSPAVPKDEPKNESTASAPTPAPTPAPEPENTSF. Positions 177–214 constitute a Peripheral subunit-binding (PSBD) domain; that stretch reads NALPAAKRLAREKGIDLRNVKGSGPGGKITEEDVKKAL. Residues His-431 and Asp-435 contribute to the active site.

It belongs to the 2-oxoacid dehydrogenase family. Requires (R)-lipoate as cofactor.

It localises to the mitochondrion matrix. The enzyme catalyses N(6)-[(R)-dihydrolipoyl]-L-lysyl-[protein] + acetyl-CoA = N(6)-[(R)-S(8)-acetyldihydrolipoyl]-L-lysyl-[protein] + CoA. In terms of biological role, the pyruvate dehydrogenase complex catalyzes the overall conversion of pyruvate to acetyl-CoA and CO(2). It contains multiple copies of three enzymatic components: pyruvate dehydrogenase (E1), dihydrolipoamide acetyltransferase (E2) and lipoamide dehydrogenase (E3). This Neurospora crassa (strain ATCC 24698 / 74-OR23-1A / CBS 708.71 / DSM 1257 / FGSC 987) protein is Dihydrolipoyllysine-residue acetyltransferase component of pyruvate dehydrogenase complex, mitochondrial (mrp-3).